A 75-amino-acid polypeptide reads, in one-letter code: UPF0154 protein MYPE400 (75 aa).

Residues 5–27 (IGLCLGLGIPISLIIGAVIGYYF) traverse the membrane as a helical segment.

It belongs to the UPF0154 family.

It localises to the membrane. The protein is UPF0154 protein MYPE400 of Malacoplasma penetrans (strain HF-2) (Mycoplasma penetrans).